The chain runs to 214 residues: Ras-related protein RABA2b (214 aa).

19-26 (GDSGVGKS) contacts GTP. The Effector region motif lies at 41-49 (SKSTIGVEF). GTP contacts are provided by residues 67-71 (DTAGQ), 125-128 (NKSD), and 155-156 (SA). 2 S-geranylgeranyl cysteine lipidation sites follow: C211 and C212.

It belongs to the small GTPase superfamily. Rab family. As to expression, expressed in root tips.

The protein localises to the endosome membrane. It is found in the golgi apparatus. Its subcellular location is the trans-Golgi network membrane. In terms of biological role, intracellular vesicle trafficking and protein transport. This is Ras-related protein RABA2b (RABA2B) from Arabidopsis thaliana (Mouse-ear cress).